The chain runs to 455 residues: MTQIMTPKTIVHELERHIIGQNDAKKAVAIALRNRWRRMQLDNEMRQEVTPKNILMIGPTGVGKTEIARRLAKLADAPFIKVEATKFTEVGYVGKDVESIIRDLVETAVKMKREEAKEKVTEKAARLAEDRILDVLIPPARTSESKVGFANEPAEDAASKKEKENKTREIFRKKIQNGELDDKEIEIEVAVAPKTIGVMGPPGMEDMTSQLQDLFSSLSTDKKKNKKMRIKDAIKLAQDEEAAKLVNEEDIKARALEAVEQNGIVFLDEIDKVCRKSSNSGADVSREGVQRDLLPLVEGSTVSTKYGVIKTDHILFIASGAFHVAKPSDLIPELQGRLPIRVELKSLEIEDFVRILREPDCSILKQYIALMKTEGIDLSFEEDAIRKIAEIAYKVNEEVENIGARRLHTVMERLLEKISFDAPELVEKNINITTDYVNEKLGNLVKNKDLSQYIL.

ATP contacts are provided by residues Ile-19 and 61-66 (GVGKTE). The segment at 144 to 163 (ESKVGFANEPAEDAASKKEK) is disordered. The ATP site is built by Asp-268, Glu-333, and Arg-405.

Belongs to the ClpX chaperone family. HslU subfamily. A double ring-shaped homohexamer of HslV is capped on each side by a ring-shaped HslU homohexamer. The assembly of the HslU/HslV complex is dependent on binding of ATP.

It localises to the cytoplasm. Its function is as follows. ATPase subunit of a proteasome-like degradation complex; this subunit has chaperone activity. The binding of ATP and its subsequent hydrolysis by HslU are essential for unfolding of protein substrates subsequently hydrolyzed by HslV. HslU recognizes the N-terminal part of its protein substrates and unfolds these before they are guided to HslV for hydrolysis. This is ATP-dependent protease ATPase subunit HslU from Francisella tularensis subsp. holarctica (strain FTNF002-00 / FTA).